We begin with the raw amino-acid sequence, 102 residues long: Integration host factor subunit alpha (102 aa).

This sequence belongs to the bacterial histone-like protein family. Heterodimer of an alpha and a beta chain.

Its function is as follows. This protein is one of the two subunits of integration host factor, a specific DNA-binding protein that functions in genetic recombination as well as in transcriptional and translational control. The protein is Integration host factor subunit alpha of Albidiferax ferrireducens (strain ATCC BAA-621 / DSM 15236 / T118) (Rhodoferax ferrireducens).